A 447-amino-acid chain; its full sequence is Mannose/glucose-specific lectin (447 aa).

Jacalin-type lectin domains follow at residues 5-148 (MISV…FVKP), 153-294 (TISF…YVKP), and 300-443 (SISI…FVKP).

The protein belongs to the jacalin lectin family. In terms of tissue distribution, expressed in seeds (at protein level).

With respect to regulation, hemagglutinating activity is slightly inhibited by alpha-methyl-D-mannopyranoside. D-mannose/D-glucose-binding lectin that also binds derivatives N-acetyl-D-glucosamine and alpha-methyl-D-mannopyranoside. Does not bind D-galactose, L-Rhamnose, D-fructose, lactose or glycoproteins fetiun and mucin. Shows agglutinating activity towards human and rabbit erythrocytes. Also displays antimicrobial activity against L.infantum. The polypeptide is Mannose/glucose-specific lectin (Parkia pendula (Inga pendula)).